The primary structure comprises 81 residues: Photosystem I iron-sulfur center (81 aa).

4Fe-4S ferredoxin-type domains lie at 2–31 and 39–68; these read AHSVKIYDTCIGCTQCVRACPTDVLEMISW and IASAPRTEDCVGCKRCESACPTDFLSVRVY. Residues Cys-11, Cys-14, Cys-17, Cys-21, Cys-48, Cys-51, Cys-54, and Cys-58 each contribute to the [4Fe-4S] cluster site.

The eukaryotic PSI reaction center is composed of at least 11 subunits. Requires [4Fe-4S] cluster as cofactor.

The protein resides in the plastid. Its subcellular location is the chloroplast thylakoid membrane. It catalyses the reaction reduced [plastocyanin] + hnu + oxidized [2Fe-2S]-[ferredoxin] = oxidized [plastocyanin] + reduced [2Fe-2S]-[ferredoxin]. In terms of biological role, apoprotein for the two 4Fe-4S centers FA and FB of photosystem I (PSI); essential for photochemical activity. FB is the terminal electron acceptor of PSI, donating electrons to ferredoxin. The C-terminus interacts with PsaA/B/D and helps assemble the protein into the PSI complex. Required for binding of PsaD and PsaE to PSI. PSI is a plastocyanin-ferredoxin oxidoreductase, converting photonic excitation into a charge separation, which transfers an electron from the donor P700 chlorophyll pair to the spectroscopically characterized acceptors A0, A1, FX, FA and FB in turn. The sequence is that of Photosystem I iron-sulfur center (psaC) from Anthoceros angustus (Hornwort).